The chain runs to 147 residues: UPF0306 protein YhbP (147 aa).

The protein belongs to the UPF0306 family.

The polypeptide is UPF0306 protein YhbP (Escherichia coli O1:K1 / APEC).